Consider the following 554-residue polypeptide: DnaJ homolog subfamily C member 1 (554 aa).

The first 47 residues, 1 to 47 (MTAPCSQPAQLPGRRQLGLVPFPPPPPRTPLLWLLLLLLAAVAPARG), serve as a signal peptide directing secretion. Residues 48-153 (WESGDLELFD…RRVRKMSNAE (106 aa)) lie on the Lumenal side of the membrane. Residues 65–129 (NFYQFLGVQQ…ERRQRYDDIL (65 aa)) form the J domain. The helical transmembrane segment at 154–174 (LALLLFIILTVGHYAVVWSIY) threads the bilayer. Residues 175 to 554 (LEKQLDELLS…LVQKKKQAKS (380 aa)) are Cytoplasmic-facing. The region spanning 325 to 379 (KQAPEWTEEDLSQLTRSMVKFPGGTPGRWEKIAHELGRSVTDVTTKAKQLKDSVT) is the SANT 1 domain. Position 381 is a phosphoserine (S381). Positions 392–405 (STVQNSRPIKTATT) are enriched in polar residues. The tract at residues 392–500 (STVQNSRPIK…RSAEEPWTQN (109 aa)) is disordered. Positions 421 to 432 (AAEEEQEGDSGE) are enriched in acidic residues. S430 carries the phosphoserine modification. Residues 455-472 (AKPEPEEKSRAKRQKDFD) are compositionally biased toward basic and acidic residues. Acidic residues predominate over residues 473–482 (IAEQNESSDE). Phosphoserine is present on residues S479, S480, S484, and S492. Residues 483-494 (ESLRKERARSAE) are compositionally biased toward basic and acidic residues. Positions 492-547 (SAEEPWTQNQQKLLELALQQYPRGSSDRWDKIARCVPSKSKEDCIARYKLLVELVQ) constitute an SANT 2 domain.

Interacts (via J domain) with HSPA5. Interacts (via cytosolic domain) with ribosomes. Interacts (via SANT 2 domain) with SERPINA3; the interaction delays the formation of the covalent inhibitory complex SERPINA3-chymotrypsin, but does not alter the catalytic activity of SERPINA3. Interacts (via SANT 2 domain) with ITIH4 (via C-terminus); the interaction protects ITIH4 against in vitro cleavage by kallikrein.

It localises to the endoplasmic reticulum membrane. Its subcellular location is the nucleus membrane. It is found in the microsome membrane. May modulate protein synthesis. The polypeptide is DnaJ homolog subfamily C member 1 (DNAJC1) (Homo sapiens (Human)).